The following is a 313-amino-acid chain: GDP-D-glycero-alpha-D-manno-heptose dehydrogenase (313 aa).

Residues Tyr13–Ile14, Asp33–Gln39, Phe37, Asp57–Ala58, Leu77, and Tyr144–Lys148 contribute to the NADH site. Position 168 (Thr168) interacts with GDP. Residues Val169 and Arg175–Arg177 each bind NADH. Residues Asp179 to Asp184, Val196 to Phe198, Arg204, Lys242, and Arg270 each bind GDP. Asn311 is an NADH binding site.

In terms of assembly, homotetramer. NAD(+) is required as a cofactor.

It catalyses the reaction GDP-D-glycero-alpha-D-manno-heptose + 2-oxoglutarate = GDP-D-glycero-4-keto-alpha-D-lyxo-heptose + (S)-2-hydroxyglutarate. Its pathway is capsule biogenesis; capsule polysaccharide biosynthesis. In terms of biological role, NAD-dependent dehydrogenase involved in the biosynthesis of heptose moieties with a hydroxyl group at C6 found on the capsular polysaccharide (CPS) of C.jejuni. Catalyzes the initial oxidation of C4 of the GDP-D-glycero-alpha-D-manno-heptose to form GDP-D-glycero-4-keto-alpha-D-lyxo-heptose in the presence of alpha-ketoglutarate required to recycle the NADH nucleotide. This Campylobacter jejuni subsp. jejuni serotype O:2 (strain ATCC 700819 / NCTC 11168) protein is GDP-D-glycero-alpha-D-manno-heptose dehydrogenase.